The following is a 299-amino-acid chain: Nitrogenase iron protein (299 aa).

11–18 (GKGGIGKS) contacts ATP. Cys99 provides a ligand contact to [4Fe-4S] cluster. Arg102 is subject to ADP-ribosylarginine; by dinitrogenase reductase ADP-ribosyltransferase. Position 133 (Cys133) interacts with [4Fe-4S] cluster.

It belongs to the NifH/BchL/ChlL family. As to quaternary structure, homodimer. It depends on [4Fe-4S] cluster as a cofactor. The reversible ADP-ribosylation of Arg-102 inactivates the nitrogenase reductase and regulates nitrogenase activity.

The catalysed reaction is N2 + 8 reduced [2Fe-2S]-[ferredoxin] + 16 ATP + 16 H2O = H2 + 8 oxidized [2Fe-2S]-[ferredoxin] + 2 NH4(+) + 16 ADP + 16 phosphate + 6 H(+). Its function is as follows. The key enzymatic reactions in nitrogen fixation are catalyzed by the nitrogenase complex, which has 2 components: the iron protein and the molybdenum-iron protein. The chain is Nitrogenase iron protein from Methylobacterium nodulans (strain LMG 21967 / CNCM I-2342 / ORS 2060).